A 95-amino-acid chain; its full sequence is ESAT-6-like protein EsxA (95 aa).

Belongs to the WXG100 family. ESAT-6 subfamily. As to quaternary structure, forms a tight 1:1 complex with EsxB.

The protein is ESAT-6-like protein EsxA of Corynebacterium diphtheriae (strain ATCC 700971 / NCTC 13129 / Biotype gravis).